A 586-amino-acid polypeptide reads, in one-letter code: Arginine--tRNA ligase (586 aa).

The 'HIGH' region motif lies at 131 to 141; it reads ANPTGPMHVGH.

This sequence belongs to the class-I aminoacyl-tRNA synthetase family. As to quaternary structure, monomer.

It is found in the cytoplasm. The catalysed reaction is tRNA(Arg) + L-arginine + ATP = L-arginyl-tRNA(Arg) + AMP + diphosphate. The polypeptide is Arginine--tRNA ligase (Azorhizobium caulinodans (strain ATCC 43989 / DSM 5975 / JCM 20966 / LMG 6465 / NBRC 14845 / NCIMB 13405 / ORS 571)).